Reading from the N-terminus, the 248-residue chain is 4-hydroxy-tetrahydrodipicolinate reductase (248 aa).

Residues 9-14, 77-79, and 104-107 each bind NAD(+); these read GAKGRV, GTT, and APNF. H134 acts as the Proton donor/acceptor in catalysis. H135 lines the (S)-2,3,4,5-tetrahydrodipicolinate pocket. K138 acts as the Proton donor in catalysis. Residue 144-145 participates in (S)-2,3,4,5-tetrahydrodipicolinate binding; that stretch reads GT.

It belongs to the DapB family.

Its subcellular location is the cytoplasm. It catalyses the reaction (S)-2,3,4,5-tetrahydrodipicolinate + NAD(+) + H2O = (2S,4S)-4-hydroxy-2,3,4,5-tetrahydrodipicolinate + NADH + H(+). The enzyme catalyses (S)-2,3,4,5-tetrahydrodipicolinate + NADP(+) + H2O = (2S,4S)-4-hydroxy-2,3,4,5-tetrahydrodipicolinate + NADPH + H(+). It functions in the pathway amino-acid biosynthesis; L-lysine biosynthesis via DAP pathway; (S)-tetrahydrodipicolinate from L-aspartate: step 4/4. In terms of biological role, catalyzes the conversion of 4-hydroxy-tetrahydrodipicolinate (HTPA) to tetrahydrodipicolinate. The polypeptide is 4-hydroxy-tetrahydrodipicolinate reductase (Corynebacterium glutamicum (strain ATCC 13032 / DSM 20300 / JCM 1318 / BCRC 11384 / CCUG 27702 / LMG 3730 / NBRC 12168 / NCIMB 10025 / NRRL B-2784 / 534)).